Here is a 2724-residue protein sequence, read N- to C-terminus: Eukaryotic translation initiation factor 2-alpha kinase 2 (2724 aa).

Residues 1–24 (MLNMVDQKKGINNGSSTGVINNIN) lie on the Cytoplasmic side of the membrane. A helical transmembrane segment spans residues 25–45 (GKIKNEFIFMYLIAAGGFSCV). Over 46-673 (YKIKKKKSNK…KFYIKRHNQK (628 aa)) the chain is Extracellular. A disordered region spans residues 112 to 153 (KRERRGRRKEQQREQMGDKRREKRQQQRREKRKEQNTNTKKR). The span at 120–146 (KEQQREQMGDKRREKRQQQRREKRKEQ) shows a compositional bias: basic and acidic residues. A helical transmembrane segment spans residues 674–694 (TYFFENIIFYHYIIMLFLDIE). Residues 695–718 (KYKNKFVSLFQYNLYRKLLKISKR) are Cytoplasmic-facing. Residues 719-739 (IVLMLHRIETNVICIFLLKHF) traverse the membrane as a helical segment. Topologically, residues 740–800 (EDYFIRKGIH…KKNIFNFFIE (61 aa)) are extracellular. A helical transmembrane segment spans residues 801–821 (LFLNNIQINIFKKFEILYLII). Topologically, residues 822-832 (YFYNYFEKSKQ) are cytoplasmic. Residues 833 to 853 (FDIEGIGDIIYVWLSLINLFY) traverse the membrane as a helical segment. The Extracellular segment spans residues 854–876 (DDKGKCIKILSKIFAKLNKKLYY). Residues 877-897 (VYWGKLYIIMNWTTIVDTIFI) traverse the membrane as a helical segment. The Cytoplasmic segment spans residues 898–908 (RNVLSINREGN). Residues 909–929 (YYWVIIVLKMINYFVNVAYTL) traverse the membrane as a helical segment. Residues 930–996 (TRMDIFFIKV…KKNYDIYTKY (67 aa)) are Extracellular-facing. The helical transmembrane segment at 997-1017 (AILFIYCFIIQAYYFDTLFNI) threads the bilayer. Over 1018 to 2724 (RSLESNEIAN…GDIFLPDKCP (1707 aa)) the chain is Cytoplasmic. Residue Lys-2029 coordinates ATP. Residues 2084–2719 (KHYFTKCGIL…KIISAGDIFL (636 aa)) form the Protein kinase domain. Residues 2120–2155 (INTLNEENQNMFCKNKEKKEENYKKIDTNISQFSEK) are a coiled coil. The active-site Proton acceptor is Asp-2229. The segment at 2479 to 2507 (EKMDKNKIAAQKKKKKKENKHPIGRRSTN) is disordered. Over residues 2488–2502 (AQKKKKKKENKHPIG) the composition is skewed to basic residues.

This sequence belongs to the protein kinase superfamily. Ser/Thr protein kinase family. GCN2 subfamily. Auto-phosphorylated.

It localises to the membrane. It carries out the reaction L-seryl-[protein] + ATP = O-phospho-L-seryl-[protein] + ADP + H(+). It catalyses the reaction L-threonyl-[protein] + ATP = O-phospho-L-threonyl-[protein] + ADP + H(+). Phosphorylates translation factor eIF2alpha in salivary gland sporozoites during dormancy, which leads to an inhibition of protein translation and accumulation of stalled mRNAs into granules. This is Eukaryotic translation initiation factor 2-alpha kinase 2 from Plasmodium berghei (strain Anka).